Consider the following 166-residue polypeptide: MNMKTIEDVFIHLLSDTYSAEKQLTRALAKLARATSNEKLSQAFHAHLEETHGQIERIDQVVESESNLKIKRMKCVAMEGLIEEANEVIESTEKNEVRDAALIAAAQKVEHYEIASYGTLATLAEQLGYRKAAKLLKETLEEEKATDIKLTDLAINNVNKKAENKA.

Homodimer.

In Escherichia coli (strain K12), this protein is Protein YciF (yciF).